Here is a 162-residue protein sequence, read N- to C-terminus: MRPEDLNDLSLLGQKSVPYIFEYQPEVLEAFPNRHPENDYFVKFNAPEFTSLCPITNQPDFATIYISYIPDEKLVESKSLKLYLFSFRNHGDFHENCINVIGKDLVKLMEPRYLEVWGKFTPRGGISIDPYYNYGKPGTKYEQMAEHRLFNHDLYPETIDNR.

The active-site Thioimide intermediate is the Cys53. Residue Asp60 is the Proton donor of the active site. Residues 75-77 (VES) and 94-95 (HE) contribute to the substrate site.

The protein belongs to the GTP cyclohydrolase I family. QueF type 1 subfamily.

The protein resides in the cytoplasm. It catalyses the reaction 7-aminomethyl-7-carbaguanine + 2 NADP(+) = 7-cyano-7-deazaguanine + 2 NADPH + 3 H(+). It functions in the pathway tRNA modification; tRNA-queuosine biosynthesis. Catalyzes the NADPH-dependent reduction of 7-cyano-7-deazaguanine (preQ0) to 7-aminomethyl-7-deazaguanine (preQ1). The chain is NADPH-dependent 7-cyano-7-deazaguanine reductase from Exiguobacterium sibiricum (strain DSM 17290 / CCUG 55495 / CIP 109462 / JCM 13490 / 255-15).